The chain runs to 215 residues: LysM and putative peptidoglycan-binding domain-containing protein 1 (215 aa).

One can recognise a LysM domain in the interval 37-81 (LEHQVQPGDTLQGLALRYGVSMEQIKRANRLYTNDSIFLKKSLYI). 2 stretches are compositionally biased toward polar residues: residues 86–103 (GQSD…SETE) and 173–189 (GNRT…QQRS). Disordered regions lie at residues 86–133 (GQSD…PVDF) and 148–203 (AVKK…TRAS).

The polypeptide is LysM and putative peptidoglycan-binding domain-containing protein 1 (lysmd1) (Xenopus laevis (African clawed frog)).